Reading from the N-terminus, the 535-residue chain is Glucans biosynthesis protein D 1 (535 aa).

The tat-type signal signal peptide spans 1–28 (MHRRDLLKQLAAGFLALAPGLTPSTASA). Positions 275-287 (RTDRAGDRQSAAR) are insert.

It belongs to the OpgD/OpgG family. In terms of processing, predicted to be exported by the Tat system. The position of the signal peptide cleavage has not been experimentally proven.

The protein localises to the periplasm. It functions in the pathway glycan metabolism; osmoregulated periplasmic glucan (OPG) biosynthesis. Functionally, probably involved in the control of the structural glucose backbone of osmoregulated periplasmic glucans (OPGs). The sequence is that of Glucans biosynthesis protein D 1 (opgD1) from Ralstonia nicotianae (strain ATCC BAA-1114 / GMI1000) (Ralstonia solanacearum).